Consider the following 466-residue polypeptide: ATP synthase subunit beta (466 aa).

148-155 (GGAGVGKT) is a binding site for ATP.

This sequence belongs to the ATPase alpha/beta chains family. F-type ATPases have 2 components, CF(1) - the catalytic core - and CF(0) - the membrane proton channel. CF(1) has five subunits: alpha(3), beta(3), gamma(1), delta(1), epsilon(1). CF(0) has three main subunits: a(1), b(2) and c(9-12). The alpha and beta chains form an alternating ring which encloses part of the gamma chain. CF(1) is attached to CF(0) by a central stalk formed by the gamma and epsilon chains, while a peripheral stalk is formed by the delta and b chains.

The protein localises to the cell inner membrane. The catalysed reaction is ATP + H2O + 4 H(+)(in) = ADP + phosphate + 5 H(+)(out). In terms of biological role, produces ATP from ADP in the presence of a proton gradient across the membrane. The catalytic sites are hosted primarily by the beta subunits. The chain is ATP synthase subunit beta from Xylella fastidiosa (strain M23).